A 602-amino-acid polypeptide reads, in one-letter code: MNSLFTAFRRNLLLNPNPHRNFFLHRLLSSSRRSSPLIPVEPLIQRIQSPAVPDSTCTPPQQNTVSKTDLSTISNLLENTDVVPGSSLESALDETGIEPSVELVHALFDRLSSSPMLLHSVFKWAEMKPGFTLSPSLFDSVVNSLCKAREFEIAWSLVFDRVRSDEGSNLVSADTFIVLIRRYARAGMVQQAIRAFEFARSYEPVCKSATELRLLEVLLDALCKEGHVREASMYLERIGGTMDSNWVPSVRIFNILLNGWFRSRKLKQAEKLWEEMKAMNVKPTVVTYGTLIEGYCRMRRVQIAMEVLEEMKMAEMEINFMVFNPIIDGLGEAGRLSEALGMMERFFVCESGPTIVTYNSLVKNFCKAGDLPGASKILKMMMTRGVDPTTTTYNHFFKYFSKHNKTEEGMNLYFKLIEAGHSPDRLTYHLILKMLCEDGKLSLAMQVNKEMKNRGIDPDLLTTTMLIHLLCRLEMLEEAFEEFDNAVRRGIIPQYITFKMIDNGLRSKGMSDMAKRLSSLMSSLPHSKKLPNTYREAVDAPPDKDRRKSILHRAEAMSDVLKGCRNPRKLVKMRGSHKKAVGEDINLIDDINERNGDAGDFE.

The N-terminal 35 residues, 1-35, are a transit peptide targeting the mitochondrion; it reads MNSLFTAFRRNLLLNPNPHRNFFLHRLLSSSRRSS. PPR repeat units follow at residues 134–165, 172–202, 211–241, 249–283, 284–318, 319–353, 354–388, 389–423, 424–458, 459–493, and 494–528; these read SPSL…VRSD, SADT…ARSY, ELRL…IGGT, SVRI…NVKP, TVVT…EMEI, NFMV…ESGP, TIVT…GVDP, TTTT…GHSP, DRLT…GIDP, DLLT…GIIP, and QYIT…PHSK.

It belongs to the PPR family. P subfamily.

The protein resides in the mitochondrion. This Arabidopsis thaliana (Mouse-ear cress) protein is Pentatricopeptide repeat-containing protein At5g11310, mitochondrial.